Consider the following 711-residue polypeptide: L-type lectin-domain containing receptor kinase VIII.2 (711 aa).

An N-terminal signal peptide occupies residues 1–30; the sequence is MLKLPPRFFSVYSTLIHILASFLCSSDVRG. Residues 31–315 are Extracellular-facing; it reads DFPATRFDLG…NKLCKKSPAA (285 aa). Residues 35 to 260 form a legume-lectin like region; it reads TRFDLGTLTL…IHSVDWWSFS (226 aa). N57 carries an N-linked (GlcNAc...) asparagine glycan. Residues 265-306 are disordered; that stretch reads ESSESPPPMPNSPPPSSPSSSITPSLSTVRRKTADPSSSCRN. Pro residues predominate over residues 269 to 281; it reads SPPPMPNSPPPSS. Residues 282 to 291 are compositionally biased toward low complexity; sequence PSSSITPSLS. A helical membrane pass occupies residues 316-336; the sequence is VAGVVTAGAFFLALFAGVIIW. The Cytoplasmic segment spans residues 337–711; it reads VYSKKIKYTR…IFIVGKDRSV (375 aa). The 283-residue stretch at 374–656 folds into the Protein kinase domain; sequence FSSSRVIGNG…LVGEADVPEV (283 aa). Residues 380–388 and K403 contribute to the ATP site; that span reads IGNGAFGTV. The active-site Proton acceptor is D497.

In the C-terminal section; belongs to the protein kinase superfamily. Ser/Thr protein kinase family. The protein in the N-terminal section; belongs to the leguminous lectin family.

The protein localises to the cell membrane. The catalysed reaction is L-seryl-[protein] + ATP = O-phospho-L-seryl-[protein] + ADP + H(+). It carries out the reaction L-threonyl-[protein] + ATP = O-phospho-L-threonyl-[protein] + ADP + H(+). Functionally, involved in resistance response to the pathogenic oomycetes Phytophthora infestans and Phytophthora capsici. The protein is L-type lectin-domain containing receptor kinase VIII.2 of Arabidopsis thaliana (Mouse-ear cress).